We begin with the raw amino-acid sequence, 186 residues long: MLGKSQFDDLFEKMSRKVAGHTSRRGFIGRVGTAVAGVALVPLLPVDRRGRVSRANAAESAGDPRGKWKPQDNDVQSCDYWRHCSIDGNICDCSGGSLTSCPPGTKLASSSWVASCYNPTDKQSYLISYRDCCGANVSGRCACLNTEGELPVYRPEFGNDIIWCFGAEDDAMTYHCTISPIVGKAS.

Positions 1–57 (MLGKSQFDDLFEKMSRKVAGHTSRRGFIGRVGTAVAGVALVPLLPVDRRGRVSRANA) form a signal peptide, tat-type signal. Cystine bridges form between Cys78–Cys143, Cys84–Cys116, Cys91–Cys176, Cys93–Cys141, Cys101–Cys132, and Cys133–Cys164. Trp112 is modified (tryptophylquinone). A cross-link (tryptophan tryptophylquinone (Trp-Trp)) is located at residues 112–163 (WVASCYNPTDKQSYLISYRDCCGANVSGRCACLNTEGELPVYRPEFGNDIIW).

This sequence belongs to the aromatic amine dehydrogenase light chain family. In terms of assembly, heterotetramer of two light and two heavy chains. Requires tryptophan tryptophylquinone residue as cofactor. In terms of processing, predicted to be exported by the Tat system. The position of the signal peptide cleavage has been experimentally proven. Tryptophan tryptophylquinone (TTQ) is formed by oxidation of the indole ring of a tryptophan to form tryptophylquinone followed by covalent cross-linking with another tryptophan residue.

It localises to the periplasm. The enzyme catalyses 2 oxidized [amicyanin] + methylamine + H2O = 2 reduced [amicyanin] + formaldehyde + NH4(+) + 2 H(+). It functions in the pathway one-carbon metabolism; methylamine degradation; formaldehyde from methylamine: step 1/1. Its function is as follows. Methylamine dehydrogenase carries out the oxidation of methylamine. Electrons are passed from methylamine dehydrogenase to amicyanin. This Methylorubrum extorquens (strain ATCC 14718 / DSM 1338 / JCM 2805 / NCIMB 9133 / AM1) (Methylobacterium extorquens) protein is Methylamine dehydrogenase light chain (mauA).